Here is a 600-residue protein sequence, read N- to C-terminus: Proline--tRNA ligase (600 aa).

It belongs to the class-II aminoacyl-tRNA synthetase family. ProS type 1 subfamily. Homodimer.

It is found in the cytoplasm. It catalyses the reaction tRNA(Pro) + L-proline + ATP = L-prolyl-tRNA(Pro) + AMP + diphosphate. Catalyzes the attachment of proline to tRNA(Pro) in a two-step reaction: proline is first activated by ATP to form Pro-AMP and then transferred to the acceptor end of tRNA(Pro). As ProRS can inadvertently accommodate and process non-cognate amino acids such as alanine and cysteine, to avoid such errors it has two additional distinct editing activities against alanine. One activity is designated as 'pretransfer' editing and involves the tRNA(Pro)-independent hydrolysis of activated Ala-AMP. The other activity is designated 'posttransfer' editing and involves deacylation of mischarged Ala-tRNA(Pro). The misacylated Cys-tRNA(Pro) is not edited by ProRS. The protein is Proline--tRNA ligase of Acaryochloris marina (strain MBIC 11017).